The following is a 309-amino-acid chain: Homoserine kinase (309 aa).

91–101 contributes to the ATP binding site; that stretch reads PLARGLGSSAA.

The protein belongs to the GHMP kinase family. Homoserine kinase subfamily.

The protein resides in the cytoplasm. The enzyme catalyses L-homoserine + ATP = O-phospho-L-homoserine + ADP + H(+). It functions in the pathway amino-acid biosynthesis; L-threonine biosynthesis; L-threonine from L-aspartate: step 4/5. Its function is as follows. Catalyzes the ATP-dependent phosphorylation of L-homoserine to L-homoserine phosphate. The protein is Homoserine kinase of Bacillus velezensis (strain DSM 23117 / BGSC 10A6 / LMG 26770 / FZB42) (Bacillus amyloliquefaciens subsp. plantarum).